A 285-amino-acid chain; its full sequence is 4-hydroxybenzoate octaprenyltransferase (285 aa).

8 consecutive transmembrane segments (helical) span residues 28–48, 86–106, 110–130, 133–153, 160–180, 207–227, 232–252, and 262–284; these read LWAL…CIFF, IAAW…FALI, NSLT…YPFF, FFAI…PMAF, VPLV…AYDT, VAAI…AGVM, WPYW…YTLI, and AAFR…AYAI.

It belongs to the UbiA prenyltransferase family. Mg(2+) serves as cofactor.

It localises to the cell inner membrane. It carries out the reaction all-trans-octaprenyl diphosphate + 4-hydroxybenzoate = 4-hydroxy-3-(all-trans-octaprenyl)benzoate + diphosphate. It participates in cofactor biosynthesis; ubiquinone biosynthesis. Functionally, catalyzes the prenylation of para-hydroxybenzoate (PHB) with an all-trans polyprenyl group. Mediates the second step in the final reaction sequence of ubiquinone-8 (UQ-8) biosynthesis, which is the condensation of the polyisoprenoid side chain with PHB, generating the first membrane-bound Q intermediate 3-octaprenyl-4-hydroxybenzoate. This chain is 4-hydroxybenzoate octaprenyltransferase, found in Cupriavidus pinatubonensis (strain JMP 134 / LMG 1197) (Cupriavidus necator (strain JMP 134)).